A 642-amino-acid polypeptide reads, in one-letter code: Threonine--tRNA ligase (642 aa).

The 61-residue stretch at 1 to 61 (MPVITLPDGS…ETDAELSIIT (61 aa)) folds into the TGS domain. The interval 243 to 534 (DHRKIGKQLD…LIEEYAGRFP (292 aa)) is catalytic. Residues cysteine 334, histidine 385, and histidine 511 each contribute to the Zn(2+) site.

This sequence belongs to the class-II aminoacyl-tRNA synthetase family. As to quaternary structure, homodimer. Zn(2+) is required as a cofactor.

The protein resides in the cytoplasm. It catalyses the reaction tRNA(Thr) + L-threonine + ATP = L-threonyl-tRNA(Thr) + AMP + diphosphate + H(+). Functionally, catalyzes the attachment of threonine to tRNA(Thr) in a two-step reaction: L-threonine is first activated by ATP to form Thr-AMP and then transferred to the acceptor end of tRNA(Thr). Also edits incorrectly charged L-seryl-tRNA(Thr). The sequence is that of Threonine--tRNA ligase from Shewanella sp. (strain ANA-3).